The following is a 304-amino-acid chain: N-carbamoyl-D-amino acid hydrolase (304 aa).

Positions 5 to 276 (MILAVGQQGP…DEVITAAVCL (272 aa)) constitute a CN hydrolase domain. Active-site residues include glutamate 47, lysine 127, and cysteine 172.

Homotetramer.

It carries out the reaction an N-carbamoyl-D-amino acid + H2O + 2 H(+) = a D-alpha-amino acid + NH4(+) + CO2. Its activity is regulated as follows. The activity decreases with increasing concentration of H(2)O(2). Has 68% and 43% of activity remaining upon treatment with 0.1 and 0.2 mM H(2)O(2) for 30 minutes, respectively. Inhibited significantly by 2 mM Zn(2+), Cu(2+) and Ag(+), moderately by Co(2+), Mn(2+), Sn(2+) and Mg(2+), and only slightly by Ba(2+). Slightly activated by Fe(2+) and Ca(2+). No effect on activity by metal chelators EDTA and 8-hydroxyquinoline at 2 mM or by dithiothreitol, 2-mercaptoethanol or phenylmethanesulfonyl fluoride. Catalyzes the hydrolysis of N-carbamoyl-D-amino acids to the corresponding D-amino acids. Hydrolyzes aromatic and aliphatic N-carbamoyl-D-amino acids in vitro. Effectively hydrolyzes N-carbamoyl-D-p-hydroxyphenylglycine and N-carbamoyl-DL-p-hydroxyphenylglycine, and to a lesser extent N-carbamoyl-D-methionine. No activity for N-carbamoyl-L-amino acids, N-carbamoyl-beta-alanine or (RS)-alpha-ethyl-N-carbamoylphenylglycine in vitro. The protein is N-carbamoyl-D-amino acid hydrolase of Ensifer adhaerens (Sinorhizobium morelense).